A 655-amino-acid polypeptide reads, in one-letter code: Polycyclic ketone monooxygenase (655 aa).

FAD-binding residues include Gly-89, Asp-113, Ala-114, Thr-121, Trp-124, Cys-132, Asp-133, Tyr-139, and Val-183. 5 residues coordinate NADPH: Thr-277, Thr-280, Thr-301, Lys-425, and Val-452. Residues Cys-424 and Cys-596 are joined by a disulfide bond. FAD contacts are provided by Thr-492 and Asn-541. Tyr-600 is an NADPH binding site.

The protein belongs to the FAD-binding monooxygenase family. FAD serves as cofactor.

Functionally, polycyclic ketone monooxygenase (PockeMO) that displays excellent enantioselectivity, acts on various ketones, and is particularly active on polycyclic molecules. Breaks C-C bonds through the insertion of a single oxygen atom adjacent to a carbonyl moiety, yielding esters or lactones from ketones. PockeMO is able to convert linear ketones (including cyclohexane and to a lesser extend 4-octanone), cyclic ketones (including cyclohexanone and cyclooctanone), bicyclic ketones and polycyclic ketones (steroids). Performs oxidation of the keto functionalities at both the A and D rings of steroids. Particularly, oxidizes the A ring of stanolone or pregnenolone. Selectively oxidizes the D ring of androstenedione or androstadienedione, steroids with keto groups in both the A and D rings, to yield the pharmaceutically relevant testo(lo)lactone. This Thermothelomyces thermophilus (strain ATCC 42464 / BCRC 31852 / DSM 1799) (Sporotrichum thermophile) protein is Polycyclic ketone monooxygenase.